We begin with the raw amino-acid sequence, 63 residues long: U7-theraphotoxin-Cg1a (63 aa).

A signal peptide spans 1-21; the sequence is MKTSILFVIFGLALLFALSVA. The propeptide occupies 22–31; it reads IEMEEEETDR. Cystine bridges form between Cys33–Cys47, Cys40–Cys52, and Cys46–Cys59.

As to expression, expressed by the venom gland.

The protein localises to the secreted. Its function is as follows. Inhibits preferentially tetrodotoxin-insensitive sodium currents (Nav) on rat cardiac myocytes (IC(50) is 0.26 uM) and has weaker inhibition activity toward tetrodotoxin-sensitive sodium currents on rat dorsal root ganglion (DRG) sensory neurons (IC(50) is 0.83 uM) and on cockroach dorsal unpaired median (DUM) neurons (IC(50) is 1.19 uM). Has no significant effect on potassium currents on DRG neurons. This Chilobrachys guangxiensis (Chinese earth tiger tarantula) protein is U7-theraphotoxin-Cg1a.